The chain runs to 1002 residues: Lon protease homolog, mitochondrial (1002 aa).

Residues 102 to 313 enclose the Lon N-terminal domain; the sequence is VIALPLPHRP…LTLELVKKEM (212 aa). 468-475 is an ATP binding site; sequence GPPGVGKT. One can recognise a Lon proteolytic domain in the interval 811–995; sequence QTPVGVVMGL…NEIFDIAFQS (185 aa). Residues Ser901 and Lys944 contribute to the active site.

This sequence belongs to the peptidase S16 family. In terms of assembly, homohexamer or homoheptamer. Organized in a ring with a central cavity.

The protein localises to the mitochondrion matrix. The catalysed reaction is Hydrolysis of proteins in presence of ATP.. Its function is as follows. ATP-dependent serine protease that mediates the selective degradation of misfolded, unassembled or oxidatively damaged polypeptides as well as certain short-lived regulatory proteins in the mitochondrial matrix. May also have a chaperone function in the assembly of inner membrane protein complexes. Participates in the regulation of mitochondrial gene expression and in the maintenance of the integrity of the mitochondrial genome. Binds to mitochondrial DNA in a site-specific manner. The polypeptide is Lon protease homolog, mitochondrial (Oryza sativa subsp. japonica (Rice)).